The primary structure comprises 168 residues: Bifunctional protein PyrR (168 aa).

Residues 90 to 102 (LVLIDDVLMSGRT) carry the PRPP-binding motif.

The protein belongs to the purine/pyrimidine phosphoribosyltransferase family. PyrR subfamily.

It carries out the reaction UMP + diphosphate = 5-phospho-alpha-D-ribose 1-diphosphate + uracil. Regulates the transcription of the pyrimidine nucleotide (pyr) operon in response to exogenous pyrimidines. Its function is as follows. Also displays a weak uracil phosphoribosyltransferase activity which is not physiologically significant. In Pseudomonas fluorescens (strain ATCC BAA-477 / NRRL B-23932 / Pf-5), this protein is Bifunctional protein PyrR.